The sequence spans 250 residues: Bacteriorhodopsin-II (250 aa).

A run of 7 helical transmembrane segments spans residues 14 to 34 (EGIW…YFMA), 49 to 69 (VITI…FFGF), 89 to 109 (YADW…LAGA), 114 to 134 (MASL…ATLM), 142 to 162 (AFWT…VVVV), 183 to 203 (IILV…EGLG), and 210 to 230 (ETLL…FILL). At Lys-222 the chain carries N6-(retinylidene)lysine.

This sequence belongs to the archaeal/bacterial/fungal opsin family. In terms of processing, the covalent binding of retinal to the apoprotein, bacterioopsin, generates bacteriorhodopsin.

It is found in the membrane. Its function is as follows. Light-driven proton pump. The polypeptide is Bacteriorhodopsin-II (xop1) (Haloarcula marismortui (strain ATCC 43049 / DSM 3752 / JCM 8966 / VKM B-1809) (Halobacterium marismortui)).